A 398-amino-acid polypeptide reads, in one-letter code: Phosphoglycerate kinase (398 aa).

Substrate is bound by residues 21–23 (DFN), Arg-41, 64–67 (HLGR), Arg-123, and Arg-156. ATP-binding positions include Lys-207, Gly-294, Glu-325, and 354-357 (GGDS).

Belongs to the phosphoglycerate kinase family. Monomer.

The protein localises to the cytoplasm. It catalyses the reaction (2R)-3-phosphoglycerate + ATP = (2R)-3-phospho-glyceroyl phosphate + ADP. The protein operates within carbohydrate degradation; glycolysis; pyruvate from D-glyceraldehyde 3-phosphate: step 2/5. The protein is Phosphoglycerate kinase of Salinibacter ruber (strain DSM 13855 / M31).